The chain runs to 262 residues: Ferric siderophore reductase (262 aa).

Residues Cys-244, Cys-245, Cys-256, and Cys-259 each contribute to the [2Fe-2S] cluster site.

Monomer. Requires [2Fe-2S] cluster as cofactor.

The protein localises to the cytoplasm. Its subcellular location is the cell inner membrane. Displays pH dependent redox properties. SufD is necessary for the stability of FhuF. Functionally, siderophore-iron reductase which is involved in iron removal from the hydroxamate-type siderophores coprogen, ferrichrome and ferrioxamine B after their transport into the cell. Binds both the iron-loaded and the apo forms of ferrichrome. In Escherichia coli (strain K12), this protein is Ferric siderophore reductase (fhuF).